The following is a 918-amino-acid chain: MRRSAAPSQVLGNVAKKPRFIPPGKSNALCPKIETEETDQDVKLKEIGEKHGNASLFSEMFSENQSENFTQSVESSGKVKSTKAWNSTSKCSKLEMKTQSAPKADAMHLPTSGMAKEAAAQEEPDCLTKYFSVMWCKASKKKHKKWEGDAILITKGKSVILKDMEGKDIGRGTGYKSKELDSLEEGQTLMIGGKEIEVMGVISADDFSSGRCFQAGIATHDTVPTALPQTTMKQFCKPIKSACQPSTKENILLNPQSCKPRHNPNDTNSLVMPRPNASHQCMFNKAGLPVVDVVVDPYIANNLRPHQREGIVFLYECVMGMRVSGRFGAILADEMGLGKTLQCISLVWTLLRQGVYGCKPVLKRALIVTPGSLVKNWKKEFQKWLGSERIKVFTVDQDHKVEEFISSPLYSVMIISYEMLLRSLDQIQAIEFNLLICDEGHRLKNSSIKTTTALTNLSCERRIILTGTPIQNDLQEFYALIEFVNPGVLGSLSTYRKIYEEPIVRSREPSATKEEKDLGEKRAAELTRLTGLFILRRTQEVINKFLPPKKENIIFCQPTALQLELYRKLLSSRVISSCLQGRLENSPHLICIGALKKLCNHPCLLFKALKEKCCDPKSDEHVESSLYEGLTDVFPQDYTSDTFSEIDSGKLQVLVKLLAAIRELSSSERVVLVSNYTQTLNVLLETCKCYGYSYTRLDGNTPVSQRQQIVDSFNSKFSPAFIFLLSSKAGGVGLNLVGASHLILYDIDWNPATDIQAMARVWRDGQKCTVHIYRLLTTGTIEEKIYQRQISKQDLSGAVVDLSKTSEHIHFSVEELRNLFTLHENSSCVTHDLLECDCMGNKDHQNPSSKKPSVSRCCQLRQDQGKHNSKKPLSMSQLMQWKHFSGQHQALPDPFLERIKENVSFIFQNVTNATSPTQ.

Positions 1-11 (MRRSAAPSQVL) are enriched in polar residues. A disordered region spans residues 1-29 (MRRSAAPSQVLGNVAKKPRFIPPGKSNAL). One can recognise a Helicase ATP-binding domain in the interval 320–487 (GMRVSGRFGA…YALIEFVNPG (168 aa)). Residue 333–340 (DEMGLGKT) participates in ATP binding. The short motif at 438 to 441 (DEGH) is the DEGH box element. The region spanning 653 to 817 (VLVKLLAAIR…HIHFSVEELR (165 aa)) is the Helicase C-terminal domain. The disordered stretch occupies residues 842 to 873 (KDHQNPSSKKPSVSRCCQLRQDQGKHNSKKPL).

This sequence belongs to the SNF2/RAD54 helicase family.

The protein localises to the nucleus. In terms of biological role, involved in DNA repair and mitotic recombination. This is DNA repair and recombination protein RAD54B (RAD54B) from Gallus gallus (Chicken).